The sequence spans 46 residues: Toxin PhcrTx2 (46 aa).

3 disulfides stabilise this stretch: C4–C40, C6–C32, and C22–C41.

This sequence belongs to the sea anemone type 3 (BDS) potassium channel toxin family.

The protein localises to the secreted. It is found in the nematocyst. Functionally, neurotoxin that induces paralysis (but not death) to U.thayeri crabs. Partially and reversibly inhibits glutamate-evoked peak currents (IC(50)=4.7 uM) but not voltage-gated potassium channel currents in cultured isolated neurons from the land snail H.aspersa. Weakly inhibits voltage-gated potassium peak currents (IC(50)=6.4 uM) and steady-state currents (IC(50)=8.2 uM) in rat dorsal root ganglion (DRG) neurons. Weakly inhibits voltage-gated sodium currents in rat DRG neurons (IC(50)=0.9 uM). In Phymanthus crucifer (Red beaded anemone), this protein is Toxin PhcrTx2.